The primary structure comprises 108 residues: ER membrane protein complex subunit 6 (108 aa).

3 helical membrane-spanning segments follow: residues 21–41 (VVSF…GILG), 45–65 (YEGL…LFAL), and 86–106 (ILDG…LVYV).

The protein belongs to the EMC6 family.

The protein localises to the endoplasmic reticulum membrane. The sequence is that of ER membrane protein complex subunit 6 from Schizosaccharomyces pombe (strain 972 / ATCC 24843) (Fission yeast).